The chain runs to 176 residues: Ribosome maturation factor RimM (176 aa).

The PRC barrel domain occupies 101 to 170 (EGEYFESDLI…RITVELPEGL (70 aa)).

It belongs to the RimM family. Binds ribosomal protein uS19.

Its subcellular location is the cytoplasm. An accessory protein needed during the final step in the assembly of 30S ribosomal subunit, possibly for assembly of the head region. Essential for efficient processing of 16S rRNA. May be needed both before and after RbfA during the maturation of 16S rRNA. It has affinity for free ribosomal 30S subunits but not for 70S ribosomes. This Solibacter usitatus (strain Ellin6076) protein is Ribosome maturation factor RimM.